The following is a 345-amino-acid chain: Phosphoribosylformylglycinamidine cyclo-ligase (345 aa).

The protein belongs to the AIR synthase family.

It is found in the cytoplasm. It catalyses the reaction 2-formamido-N(1)-(5-O-phospho-beta-D-ribosyl)acetamidine + ATP = 5-amino-1-(5-phospho-beta-D-ribosyl)imidazole + ADP + phosphate + H(+). The protein operates within purine metabolism; IMP biosynthesis via de novo pathway; 5-amino-1-(5-phospho-D-ribosyl)imidazole from N(2)-formyl-N(1)-(5-phospho-D-ribosyl)glycinamide: step 2/2. The sequence is that of Phosphoribosylformylglycinamidine cyclo-ligase from Shewanella sp. (strain MR-7).